The following is a 164-amino-acid chain: Transcriptional repressor NrdR (164 aa).

The segment at 3-34 (CPKCNYHKSSVVDSRQAEDGNTIRRRRECEQC) is a zinc-finger region. Residues 49–139 (LLVIKKDGTR…VYKSFKDVDE (91 aa)) form the ATP-cone domain.

It belongs to the NrdR family. Requires Zn(2+) as cofactor.

Negatively regulates transcription of bacterial ribonucleotide reductase nrd genes and operons by binding to NrdR-boxes. The chain is Transcriptional repressor NrdR from Streptococcus pyogenes serotype M6 (strain ATCC BAA-946 / MGAS10394).